The following is a 568-amino-acid chain: Proline--tRNA ligase (568 aa).

It belongs to the class-II aminoacyl-tRNA synthetase family. ProS type 1 subfamily. As to quaternary structure, homodimer.

It is found in the cytoplasm. It carries out the reaction tRNA(Pro) + L-proline + ATP = L-prolyl-tRNA(Pro) + AMP + diphosphate. Functionally, catalyzes the attachment of proline to tRNA(Pro) in a two-step reaction: proline is first activated by ATP to form Pro-AMP and then transferred to the acceptor end of tRNA(Pro). As ProRS can inadvertently accommodate and process non-cognate amino acids such as alanine and cysteine, to avoid such errors it has two additional distinct editing activities against alanine. One activity is designated as 'pretransfer' editing and involves the tRNA(Pro)-independent hydrolysis of activated Ala-AMP. The other activity is designated 'posttransfer' editing and involves deacylation of mischarged Ala-tRNA(Pro). The misacylated Cys-tRNA(Pro) is not edited by ProRS. In Macrococcus caseolyticus (strain JCSC5402) (Macrococcoides caseolyticum), this protein is Proline--tRNA ligase.